Reading from the N-terminus, the 272-residue chain is Indole-3-glycerol phosphate synthase (272 aa).

Belongs to the TrpC family.

The catalysed reaction is 1-(2-carboxyphenylamino)-1-deoxy-D-ribulose 5-phosphate + H(+) = (1S,2R)-1-C-(indol-3-yl)glycerol 3-phosphate + CO2 + H2O. Its pathway is amino-acid biosynthesis; L-tryptophan biosynthesis; L-tryptophan from chorismate: step 4/5. This Mycobacterium tuberculosis (strain ATCC 25177 / H37Ra) protein is Indole-3-glycerol phosphate synthase.